Reading from the N-terminus, the 146-residue chain is Hemoglobin cathodic subunit beta (146 aa).

The Globin domain occupies 2 to 146 (QWSSSERSVI…VVSGLSKQYF (145 aa)). Histidine 63 is a heme b binding site.

As to quaternary structure, heterotetramer of two alpha and two beta chains. As to expression, red blood cells.

Functionally, involved in oxygen transport from the gills to various peripheral tissues. The chain is Hemoglobin cathodic subunit beta from Ophisurus serpens (Serpent eel).